The sequence spans 314 residues: F-box protein AUF2 (314 aa).

One can recognise an F-box domain in the interval 1–49 (MDVFDGLPDPIIVDILNKVGDVKTLLRCSSLSKRFNSLVPQSESLTLRL).

Part of a SCF (ASK-cullin-F-box) protein ligase complex.

It is found in the nucleus. The protein operates within protein modification; protein ubiquitination. Component of SCF(ASK-cullin-F-box) E3 ubiquitin ligase complexes, which may mediate the ubiquitination and subsequent proteasomal degradation of target proteins. The polypeptide is F-box protein AUF2 (Arabidopsis thaliana (Mouse-ear cress)).